The following is a 468-amino-acid chain: uncharacterized protein (468 aa).

A signal peptide spans 1–19 (MRVLSVLLVALTVAGSAYS). Residues Asn-86 and Asn-334 are each glycosylated (N-linked (GlcNAc...) asparagine). Positions 401–421 (NPSTNLPETSPPTEQPTAPPA) are disordered. Over residues 409-421 (TSPPTEQPTAPPA) the composition is skewed to pro residues. A glycan (N-linked (GlcNAc...) asparagine) is linked at Asn-435. Asn-444 carries GPI-like-anchor amidated asparagine lipidation. A propeptide spans 445-468 (SASSIEMSKLVVAILSLFILAFFH) (removed in mature form).

The protein localises to the cell membrane. This is an uncharacterized protein from Dictyostelium discoideum (Social amoeba).